The following is a 1274-amino-acid chain: Polycomb protein Sfmbt (1274 aa).

The disordered stretch occupies residues 266–285 (PSSKQMKGYRNSNSSGTSSA). A compositionally biased stretch (polar residues) spans 267–278 (SSKQMKGYRNSN). The segment at 331–366 (PIQKDGMAVCERCGAIGVKHTFYTKSRRFCSMACAR) adopts an FCS-type zinc-finger fold. Positions 340, 343, 360, and 364 each coordinate Zn(2+). Over residues 381 to 394 (TGATTSNNQSTSSS) the composition is skewed to low complexity. 2 disordered regions span residues 381–401 (TGATTSNNQSTSSSPLPAASG) and 488–510 (PGGEANGSGNDTSTPNTASSGYL). The span at 494-509 (GSGNDTSTPNTASSGY) shows a compositional bias: polar residues. MBT repeat units lie at residues 564–675 (YDWL…LIPP), 683–781 (KDWK…LAAP), 789–899 (LAGR…VTPP), and 907–1003 (FTWE…LEGP). Disordered stretches follow at residues 1007–1063 (SYQQ…TTPH) and 1083–1167 (YENN…NSSA). Residues 1019-1028 (KVPRKKKTKK) show a composition bias toward basic residues. Residues 1038-1050 (AKQQNDNTQTTQT) show a composition bias toward low complexity. The span at 1087–1114 (QPEDGDGDEEDPDPDADADLDADADGDG) shows a compositional bias: acidic residues. Composition is skewed to polar residues over residues 1117 to 1128 (STSHISEQSTTH) and 1158 to 1167 (GNSNKMNSSA). The SAM domain occupies 1194-1258 (WNVYDVSQFL…DLITQLKCKV (65 aa)).

In terms of assembly, interacts with pho as a component of the pho-repressive complex (PhoRC).

The protein resides in the nucleus. Functionally, polycomb group (PcG) protein that binds to the Polycomb response elements (PREs) found in the regulatory regions of many genes. PcG proteins act by forming multiprotein complexes, which are required to maintain the transcriptionally repressive state of homeotic genes throughout development. PcG proteins are not required to initiate repression, but to maintain it during later stages of development. They probably act via the methylation of histones, rendering chromatin heritably changed in its expressibility. Necessary but not sufficient to recruit a functional PcG repressive complex that represses target genes, suggesting that the recruitment of the distinct PRC1 complex is also required to allow a subsequent repression. The polypeptide is Polycomb protein Sfmbt (Drosophila pseudoobscura pseudoobscura (Fruit fly)).